The chain runs to 349 residues: Ion-translocating oxidoreductase complex subunit D (349 aa).

Transmembrane regions (helical) follow at residues 20–42, 77–99, and 124–144; these read VMQR…FGWG, SAML…WMIV, and AMAA…TWIA. Thr185 is subject to FMN phosphoryl threonine. The next 5 helical transmembrane spans lie at 212 to 232, 239 to 259, 265 to 285, 291 to 311, and 315 to 335; these read STGV…LVLL, WHIS…GFLL, ASPL…FIAT, ATSP…VYII, and GGYP…APFI.

This sequence belongs to the NqrB/RnfD family. In terms of assembly, the complex is composed of six subunits: RnfA, RnfB, RnfC, RnfD, RnfE and RnfG. The cofactor is FMN.

It is found in the cell inner membrane. Part of a membrane-bound complex that couples electron transfer with translocation of ions across the membrane. The chain is Ion-translocating oxidoreductase complex subunit D from Shewanella baltica (strain OS195).